The chain runs to 275 residues: Ribosomal RNA small subunit methyltransferase A (275 aa).

S-adenosyl-L-methionine is bound by residues N19, L21, G46, E71, D94, and N117.

The protein belongs to the class I-like SAM-binding methyltransferase superfamily. rRNA adenine N(6)-methyltransferase family. RsmA subfamily.

It localises to the cytoplasm. It carries out the reaction adenosine(1518)/adenosine(1519) in 16S rRNA + 4 S-adenosyl-L-methionine = N(6)-dimethyladenosine(1518)/N(6)-dimethyladenosine(1519) in 16S rRNA + 4 S-adenosyl-L-homocysteine + 4 H(+). Functionally, specifically dimethylates two adjacent adenosines (A1518 and A1519) in the loop of a conserved hairpin near the 3'-end of 16S rRNA in the 30S particle. May play a critical role in biogenesis of 30S subunits. The chain is Ribosomal RNA small subunit methyltransferase A from Burkholderia mallei (strain NCTC 10247).